Here is a 196-residue protein sequence, read N- to C-terminus: Holliday junction branch migration complex subunit RuvA (196 aa).

The domain I stretch occupies residues 1–69; it reads MIVGLRGTII…EDAHLLFGFC (69 aa). A domain II region spans residues 70 to 148; the sequence is EEIEKQTFER…QLLQSQEESI (79 aa). A flexible linker region spans residues 149 to 157; that stretch reads APSNNLKYE. The interval 157-196 is domain III; it reads EASLALQSLGFKRNEIQKVLEHIEALSVSEIVKEALKRLA.

This sequence belongs to the RuvA family. Homotetramer. Forms an RuvA(8)-RuvB(12)-Holliday junction (HJ) complex. HJ DNA is sandwiched between 2 RuvA tetramers; dsDNA enters through RuvA and exits via RuvB. An RuvB hexamer assembles on each DNA strand where it exits the tetramer. Each RuvB hexamer is contacted by two RuvA subunits (via domain III) on 2 adjacent RuvB subunits; this complex drives branch migration. In the full resolvosome a probable DNA-RuvA(4)-RuvB(12)-RuvC(2) complex forms which resolves the HJ.

It localises to the cytoplasm. Functionally, the RuvA-RuvB-RuvC complex processes Holliday junction (HJ) DNA during genetic recombination and DNA repair, while the RuvA-RuvB complex plays an important role in the rescue of blocked DNA replication forks via replication fork reversal (RFR). RuvA specifically binds to HJ cruciform DNA, conferring on it an open structure. The RuvB hexamer acts as an ATP-dependent pump, pulling dsDNA into and through the RuvAB complex. HJ branch migration allows RuvC to scan DNA until it finds its consensus sequence, where it cleaves and resolves the cruciform DNA. This chain is Holliday junction branch migration complex subunit RuvA, found in Helicobacter hepaticus (strain ATCC 51449 / 3B1).